The chain runs to 452 residues: Tylactone mycaminosyltransferase (452 aa).

Residues 1–16 (MRRALDDRRRGPHGPE) show a composition bias toward basic and acidic residues. The tract at residues 1-20 (MRRALDDRRRGPHGPEGKPP) is disordered.

Belongs to the glycosyltransferase 28 family.

It catalyses the reaction tylactone + dTDP-alpha-D-mycaminose = 5-O-beta-D-mycaminosyltylactone + dTDP + H(+). It functions in the pathway antibiotic biosynthesis; tylosin biosynthesis. Its activity is regulated as follows. The activity of TylM2 is substantially increased by the addition of the accessory protein TylM3. Functionally, involved in the biosynthesis of the macrolide antibiotic tylosin derived from the polyketide lactone tylactone. Catalyzes the transfer of alpha-D-mycaminosyl from dTDP-alpha-D-mycaminose to the 5-hydroxyl group of tylactone to yield 5-O-mycaminosytylactone. It can also accept 16-membered tylactone and 12-membered ring macrolide. The chain is Tylactone mycaminosyltransferase from Streptomyces fradiae (Streptomyces roseoflavus).